We begin with the raw amino-acid sequence, 427 residues long: Enolase (427 aa).

(2R)-2-phosphoglycerate is bound at residue glutamine 163. Glutamate 205 functions as the Proton donor in the catalytic mechanism. Positions 242, 285, and 312 each coordinate Mg(2+). The (2R)-2-phosphoglycerate site is built by lysine 337, arginine 366, serine 367, and lysine 388. Lysine 337 functions as the Proton acceptor in the catalytic mechanism.

It belongs to the enolase family. Mg(2+) serves as cofactor.

It is found in the cytoplasm. The protein resides in the secreted. Its subcellular location is the cell surface. The enzyme catalyses (2R)-2-phosphoglycerate = phosphoenolpyruvate + H2O. The protein operates within carbohydrate degradation; glycolysis; pyruvate from D-glyceraldehyde 3-phosphate: step 4/5. Functionally, catalyzes the reversible conversion of 2-phosphoglycerate (2-PG) into phosphoenolpyruvate (PEP). It is essential for the degradation of carbohydrates via glycolysis. This is Enolase from Laribacter hongkongensis (strain HLHK9).